Reading from the N-terminus, the 246-residue chain is UDP-N-acetyl-D-mannosaminuronic acid transferase (246 aa).

It belongs to the glycosyltransferase 26 family.

It carries out the reaction UDP-N-acetyl-alpha-D-mannosaminouronate + N-acetyl-alpha-D-glucosaminyl-di-trans,octa-cis-undecaprenyl diphosphate = beta-D-ManNAcA-(1-&gt;4)-alpha-D-GlcNAc-di-trans,octa-cis-undecaprenyl diphosphate + UDP + H(+). It participates in bacterial outer membrane biogenesis; enterobacterial common antigen biosynthesis. In terms of biological role, catalyzes the synthesis of Und-PP-GlcNAc-ManNAcA (Lipid II), the second lipid-linked intermediate involved in enterobacterial common antigen (ECA) synthesis. This Escherichia coli O1:K1 / APEC protein is UDP-N-acetyl-D-mannosaminuronic acid transferase.